The sequence spans 211 residues: Ras-related protein RABB1b (211 aa).

Residue 13–20 coordinates GTP; it reads GDTGVGKS. The Effector region motif lies at 35 to 43; the sequence is HDLTIGVEF. Residues 61–65, 119–122, and 149–150 each bind GTP; these read DTAGQ, NKCD, and SA. Residues Cys-209 and Cys-210 are each lipidated (S-geranylgeranyl cysteine).

This sequence belongs to the small GTPase superfamily. Rab family.

It is found in the cell membrane. Intracellular vesicle trafficking and protein transport. The polypeptide is Ras-related protein RABB1b (RABB1B) (Arabidopsis thaliana (Mouse-ear cress)).